Consider the following 270-residue polypeptide: Sorting nexin-11 (270 aa).

The region spanning 16–132 (VITVRVQDPR…HLFLQSQLSV (117 aa)) is the PX domain. 3 residues coordinate a 1,2-diacyl-sn-glycero-3-phospho-(1D-myo-inositol-3-phosphate): Arg-59, Lys-85, and Arg-99. The interval 135–139 (IEACV) is important for membrane trafficking. Residues 168 to 177 (GSSHLAEGDQ) show a composition bias toward basic and acidic residues. 2 disordered regions span residues 168–244 (GSSH…LSAS) and 251–270 (LGGG…VLEK). Positions 218–227 (LESPTLPPTS) are enriched in pro residues.

This sequence belongs to the sorting nexin family. In terms of assembly, monomer. Interacts with TRPV3; this interaction promotes TRPV3 trafficking from the cell membrane to lysosome for degradation.

Its subcellular location is the cell membrane. It is found in the endosome. It localises to the cytoplasm. Functionally, phosphoinositide-binding protein involved in protein sorting and membrane trafficking in endosomes. Regulates the levels of TRPV3 by promoting its trafficking from the cell membrane to lysosome for degradation. In Bos taurus (Bovine), this protein is Sorting nexin-11 (SNX11).